The chain runs to 365 residues: Carbamoyl phosphate synthase small chain (365 aa).

CPSase stretches follow at residues 1 to 166 and 1 to 169; these read MKRQ…PSPG and MKRQ…GRGH. Ser-45, Gly-218, and Gly-220 together coordinate L-glutamine. The region spanning 170–357 is the Glutamine amidotransferase type-1 domain; it reads RVVLVDFGMK…LTMIENFKKE (188 aa). Cys-245 acts as the Nucleophile in catalysis. L-glutamine is bound by residues Leu-246, Gln-249, Asn-287, Gly-289, and Tyr-290. Residues His-330 and Glu-332 contribute to the active site.

This sequence belongs to the CarA family. In terms of assembly, composed of two chains; the small (or glutamine) chain promotes the hydrolysis of glutamine to ammonia, which is used by the large (or ammonia) chain to synthesize carbamoyl phosphate. Tetramer of heterodimers (alpha,beta)4.

It carries out the reaction hydrogencarbonate + L-glutamine + 2 ATP + H2O = carbamoyl phosphate + L-glutamate + 2 ADP + phosphate + 2 H(+). The catalysed reaction is L-glutamine + H2O = L-glutamate + NH4(+). It functions in the pathway amino-acid biosynthesis; L-arginine biosynthesis; carbamoyl phosphate from bicarbonate: step 1/1. The protein operates within pyrimidine metabolism; UMP biosynthesis via de novo pathway; (S)-dihydroorotate from bicarbonate: step 1/3. In terms of biological role, small subunit of the glutamine-dependent carbamoyl phosphate synthetase (CPSase). CPSase catalyzes the formation of carbamoyl phosphate from the ammonia moiety of glutamine, carbonate, and phosphate donated by ATP, constituting the first step of 2 biosynthetic pathways, one leading to arginine and/or urea and the other to pyrimidine nucleotides. The small subunit (glutamine amidotransferase) binds and cleaves glutamine to supply the large subunit with the substrate ammonia. The polypeptide is Carbamoyl phosphate synthase small chain (Bacillus cereus (strain ATCC 14579 / DSM 31 / CCUG 7414 / JCM 2152 / NBRC 15305 / NCIMB 9373 / NCTC 2599 / NRRL B-3711)).